A 345-amino-acid chain; its full sequence is Uroporphyrinogen decarboxylase (345 aa).

Substrate-binding positions include 27 to 31, F46, D76, Y152, S207, and H321; that span reads RQAGR.

Belongs to the uroporphyrinogen decarboxylase family. In terms of assembly, homodimer.

The protein localises to the cytoplasm. The enzyme catalyses uroporphyrinogen III + 4 H(+) = coproporphyrinogen III + 4 CO2. The protein operates within porphyrin-containing compound metabolism; protoporphyrin-IX biosynthesis; coproporphyrinogen-III from 5-aminolevulinate: step 4/4. Its function is as follows. Catalyzes the decarboxylation of four acetate groups of uroporphyrinogen-III to yield coproporphyrinogen-III. The sequence is that of Uroporphyrinogen decarboxylase from Staphylococcus aureus (strain Mu3 / ATCC 700698).